A 445-amino-acid polypeptide reads, in one-letter code: Methionine aminopeptidase 2 (445 aa).

Residues M1–L89 are disordered. Residues A60–N74 are compositionally biased toward basic residues. Residue H198 coordinates substrate. Residues D218, D229, and H298 each coordinate a divalent metal cation. H306 contributes to the substrate binding site. The a divalent metal cation site is built by E331 and E426.

Belongs to the peptidase M24A family. Methionine aminopeptidase eukaryotic type 2 subfamily. It depends on Co(2+) as a cofactor. Requires Zn(2+) as cofactor. The cofactor is Mn(2+). Fe(2+) serves as cofactor.

It localises to the cytoplasm. The enzyme catalyses Release of N-terminal amino acids, preferentially methionine, from peptides and arylamides.. Its function is as follows. Cotranslationally removes the N-terminal methionine from nascent proteins. The N-terminal methionine is often cleaved when the second residue in the primary sequence is small and uncharged (Met-Ala-, Cys, Gly, Pro, Ser, Thr, or Val). This is Methionine aminopeptidase 2 from Podospora anserina (strain S / ATCC MYA-4624 / DSM 980 / FGSC 10383) (Pleurage anserina).